The following is a 281-amino-acid chain: UPF0162 protein PD_0709 (281 aa).

TPR repeat units follow at residues V193–Q226 and P227–T260.

The protein belongs to the UPF0162 family.

In Xylella fastidiosa (strain Temecula1 / ATCC 700964), this protein is UPF0162 protein PD_0709.